A 212-amino-acid chain; its full sequence is Uridine kinase (212 aa).

Position 13-20 (13-20) interacts with ATP; sequence GASASGKS.

Belongs to the uridine kinase family.

The protein localises to the cytoplasm. It catalyses the reaction uridine + ATP = UMP + ADP + H(+). The enzyme catalyses cytidine + ATP = CMP + ADP + H(+). It functions in the pathway pyrimidine metabolism; CTP biosynthesis via salvage pathway; CTP from cytidine: step 1/3. It participates in pyrimidine metabolism; UMP biosynthesis via salvage pathway; UMP from uridine: step 1/1. The polypeptide is Uridine kinase (Shewanella halifaxensis (strain HAW-EB4)).